Consider the following 131-residue polypeptide: Cuticle protein 79, isoform A (131 aa).

Tandem repeats lie at residues 37 to 40 (AAPA), 45 to 48 (AAPA), and 53 to 56 (AAPA).

In terms of biological role, component of the cuticle of migratory locust which contains more than 100 different structural proteins. The polypeptide is Cuticle protein 79, isoform A (Locusta migratoria (Migratory locust)).